Here is a 118-residue protein sequence, read N- to C-terminus: Holo-[acyl-carrier-protein] synthase (118 aa).

The Mg(2+) site is built by D8 and E58.

It belongs to the P-Pant transferase superfamily. AcpS family. It depends on Mg(2+) as a cofactor.

It localises to the cytoplasm. It carries out the reaction apo-[ACP] + CoA = holo-[ACP] + adenosine 3',5'-bisphosphate + H(+). Transfers the 4'-phosphopantetheine moiety from coenzyme A to a Ser of acyl-carrier-protein. The polypeptide is Holo-[acyl-carrier-protein] synthase (Listeria monocytogenes serotype 4b (strain CLIP80459)).